The primary structure comprises 84 residues: uncharacterized protein (84 aa).

This is an uncharacterized protein from Bacillus subtilis (strain 168).